The sequence spans 209 residues: Mei4-dependent protein 1 (209 aa).

A signal peptide spans 1–22; it reads MLHATQLCYLLLFCFLPISISS.

Its subcellular location is the secreted. This chain is Mei4-dependent protein 1 (mde1), found in Schizosaccharomyces pombe (strain 972 / ATCC 24843) (Fission yeast).